Here is a 123-residue protein sequence, read N- to C-terminus: Probable ketoamine kinase in tonB 3'region (123 aa).

D26 functions as the Proton acceptor in the catalytic mechanism.

The protein belongs to the fructosamine kinase family.

Ketoamine kinase that phosphorylates ketoamines on the third carbon of the sugar moiety to generate ketoamine 3-phosphate. This chain is Probable ketoamine kinase in tonB 3'region, found in Klebsiella pneumoniae.